Here is a 122-residue protein sequence, read N- to C-terminus: Small ribosomal subunit protein bS6 (122 aa).

Belongs to the bacterial ribosomal protein bS6 family.

Binds together with bS18 to 16S ribosomal RNA. In Neisseria gonorrhoeae (strain ATCC 700825 / FA 1090), this protein is Small ribosomal subunit protein bS6.